We begin with the raw amino-acid sequence, 96 residues long: ATP synthase subunit c (96 aa).

2 helical membrane-spanning segments follow: residues 26–46 (GLVLFGAAIGMAIAAAGCGIG) and 68–88 (IMVTLILGLAFVESLAIYALV).

Belongs to the ATPase C chain family. F-type ATPases have 2 components, F(1) - the catalytic core - and F(0) - the membrane proton channel. F(1) has five subunits: alpha(3), beta(3), gamma(1), delta(1), epsilon(1). F(0) has three main subunits: a(1), b(2) and c(10-14). The alpha and beta chains form an alternating ring which encloses part of the gamma chain. F(1) is attached to F(0) by a central stalk formed by the gamma and epsilon chains, while a peripheral stalk is formed by the delta and b chains.

Its subcellular location is the cell inner membrane. Its function is as follows. F(1)F(0) ATP synthase produces ATP from ADP in the presence of a proton or sodium gradient. F-type ATPases consist of two structural domains, F(1) containing the extramembraneous catalytic core and F(0) containing the membrane proton channel, linked together by a central stalk and a peripheral stalk. During catalysis, ATP synthesis in the catalytic domain of F(1) is coupled via a rotary mechanism of the central stalk subunits to proton translocation. Key component of the F(0) channel; it plays a direct role in translocation across the membrane. A homomeric c-ring of between 10-14 subunits forms the central stalk rotor element with the F(1) delta and epsilon subunits. This is ATP synthase subunit c from Oleidesulfovibrio alaskensis (strain ATCC BAA-1058 / DSM 17464 / G20) (Desulfovibrio alaskensis).